Consider the following 350-residue polypeptide: Phosphate acyltransferase (350 aa).

It belongs to the PlsX family. As to quaternary structure, homodimer. Probably interacts with PlsY.

It localises to the cytoplasm. The catalysed reaction is a fatty acyl-[ACP] + phosphate = an acyl phosphate + holo-[ACP]. It functions in the pathway lipid metabolism; phospholipid metabolism. Its function is as follows. Catalyzes the reversible formation of acyl-phosphate (acyl-PO(4)) from acyl-[acyl-carrier-protein] (acyl-ACP). This enzyme utilizes acyl-ACP as fatty acyl donor, but not acyl-CoA. The chain is Phosphate acyltransferase from Magnetococcus marinus (strain ATCC BAA-1437 / JCM 17883 / MC-1).